An 829-amino-acid polypeptide reads, in one-letter code: Protein roadkill (829 aa).

3 stretches are compositionally biased toward low complexity: residues 24-36 (EQQQ…QQQQ), 122-140 (TPAA…QAAP), and 266-288 (SSSS…SSSS). 4 disordered regions span residues 24-47 (EQQQ…CCEN), 106-142 (SSLQ…APSV), 266-296 (SSSS…SHHS), and 313-400 (HLNQ…NQQQ). Residues 313–322 (HLNQQQHHHP) show a composition bias toward basic residues. Composition is skewed to low complexity over residues 323–353 (LSAS…QQQH), 372–382 (SSSSSSSSSSS), and 389–400 (SSSSSNSNNQQQ). The region spanning 486–616 (KFSYMWTINN…EDKLTIFCEV (131 aa)) is the MATH domain. The 68-residue stretch at 655 to 722 (SDVTLSVGGR…IYTGKAPNLE (68 aa)) folds into the BTB domain.

Belongs to the Tdpoz family. In terms of assembly, interacts with ci and gft/CUL3. Expressed near the anterio-posterior compartment boundary of antenna, leg and wing disks.

It localises to the nucleus. It functions in the pathway protein modification; protein ubiquitination. In terms of biological role, involved in segment polarity. In complex with gft/CUL3, promotes ubiquitination of ci and its subsequent degradation by the proteasome, which results in hh signaling attenuation. This regulation may be important during eye formation for proper packing of ommatidia into a hexagonal array. This chain is Protein roadkill (rdx), found in Drosophila melanogaster (Fruit fly).